The chain runs to 304 residues: Putative S-adenosyl-L-methionine-dependent methyltransferase MMAR_1057 (304 aa).

S-adenosyl-L-methionine is bound by residues Asp130 and 159–160; that span reads DL.

The protein belongs to the UPF0677 family.

In terms of biological role, exhibits S-adenosyl-L-methionine-dependent methyltransferase activity. The protein is Putative S-adenosyl-L-methionine-dependent methyltransferase MMAR_1057 of Mycobacterium marinum (strain ATCC BAA-535 / M).